Reading from the N-terminus, the 167-residue chain is uncharacterized protein (167 aa).

This is an uncharacterized protein from Methanocaldococcus jannaschii (strain ATCC 43067 / DSM 2661 / JAL-1 / JCM 10045 / NBRC 100440) (Methanococcus jannaschii).